We begin with the raw amino-acid sequence, 922 residues long: Cell cycle and apoptosis regulator protein 2 (922 aa).

Positions 1–39 are disordered; the sequence is MSQFKRQRINPLPGGRNFSGAASTSLLGPPPGLLTPPVA. Thr-35 bears the Phosphothreonine mark. Lys-112 carries the N6-acetyllysine; by KAT8 modification. Lys-123 bears the N6-methyllysine mark. Residue Ser-124 is modified to Phosphoserine. Disordered regions lie at residues 178–219, 280–307, 446–508, and 567–638; these read LNRF…KPRH, RIQV…PTYS, KATE…EPAV, and VSPP…RGEA. An Omega-N-methylarginine modification is found at Arg-180. The span at 188–200 shows a compositional bias: basic and acidic residues; it reads GRLDQGRSDDYDS. Lys-215 is subject to N6-acetyllysine; by KAT8. Residues 473–491 show a composition bias toward polar residues; the sequence is QADTSKQNTETMEATTQQD. Thr-483 is modified (phosphothreonine). Residue Ser-568 is modified to Phosphoserine. The span at 571-601 shows a compositional bias: basic and acidic residues; the sequence is EPEKEEAAKEDAVKEEEAVKEEAVKVSKDEV. Residues 573–596 are a coiled coil; sequence EKEEAAKEDAVKEEEAVKEEAVKV. Residue Lys-590 forms a Glycyl lysine isopeptide (Lys-Gly) (interchain with G-Cter in SUMO2 and SUMO3); alternate linkage. Lys-590 participates in a covalent cross-link: Glycyl lysine isopeptide (Lys-Gly) (interchain with G-Cter in SUMO2); alternate. The interval 609 to 669 is interaction with MCC; sequence ESDSPLKEDG…DEFAGAKLEE (61 aa). Ser-612, Ser-626, Ser-674, Ser-677, and Ser-680 each carry phosphoserine. Tyr-684 is subject to Phosphotyrosine. A phosphoserine mark is found at Ser-686 and Ser-807. An interaction with NR1D1 region spans residues 703–922; it reads DCLLAFVFFD…VEKEEPTPSN (220 aa). The stretch at 828 to 898 forms a coiled coil; it reads LENKIHTLEL…QDFRRRLTPL (71 aa). The residue at position 896 (Thr-896) is a Phosphothreonine.

As to quaternary structure, component of the DBIRD complex. Interacts with ZNF326/ZIRD; the interaction is direct. Interacts (via N-terminus) with SIRT1, which inhibits the deacetylation of substrates. Interacts (via N-terminus) with SUV39H1; this interaction abolishes the interaction with SIRT1. Component of a nuclear receptor-mediated transcription complex composed of at least ZNF335, CCAR2 and EMSY; the complex stimulates the transcription of nuclear receptor target genes such as SOX9 and HOXA1. Within the complex interacts with EMSY and interacts with ZNF335 (via C-terminus). Components of this complex may associate with components of a histone methylation complex to form a complex at least composed of ZNF335, HCFC1, CCAR2, EMSY, MKI67, RBBP5, ASH2L and WDR5. Within this complex, interacts with ASH2L. Interacts with NR1D1. Interacts (via N-terminus) with ESR1 and ESR2. Interacts (via N-terminus) with HDAC3 (via C-terminus). Interacts with HDAC1 and MED2F. Interacts with MCC. Interacts (via N-terminus) with NR1H2 and NR1H3 in a ligand-independent manner. Interacts with CSNK2A1. Interacts (via N-terminus) with p53/TP53. Interacts (via N-terminus) with BRCA1 (via the BRCT domains). Interacts (via N-terminus) with CHEK2 (via protein kinase domain). Interacts with PSEM3. Interacts (via N-terminus) with PSIA3 and SENP1. The sumoylated form shows a preferential interaction with SIRT1 as compared to its unmodified form. Interacts with CECR2; may form part of the CERF-1 and/or CEF-5 ISWI chromatin remodeling complexes in embryonic stem cells. Post-translationally, acetylation at Lys-112 and Lys-215 by KAT8 prevents inhibitory binding to SIRT1 and increases its deacetylase activity. Genotoxic stress induces its sumoylation and sumoylation promotes the SIRT1-CCAR2 interaction which in turn inhibits SIRT1-mediated deacetylation of p53/TP53. Sumoylation leads to transcriptional activation of p53/TP53 by sequestering SIRT1 from p53/TP53. Desumoylated by SENP1.

It is found in the nucleus. Its subcellular location is the cytoplasm. It localises to the cytoskeleton. The protein resides in the spindle. Its function is as follows. Core component of the DBIRD complex, a multiprotein complex that acts at the interface between core mRNP particles and RNA polymerase II (RNAPII) and integrates transcript elongation with the regulation of alternative splicing: the DBIRD complex affects local transcript elongation rates and alternative splicing of a large set of exons embedded in (A + T)-rich DNA regions. Inhibits SIRT1 deacetylase activity leading to increasing levels of p53/TP53 acetylation and p53-mediated apoptosis. Inhibits SUV39H1 methyltransferase activity. Mediates ligand-dependent transcriptional activation by nuclear hormone receptors. Plays a critical role in maintaining genomic stability and cellular integrity following UV-induced genotoxic stress. Regulates the circadian expression of the core clock components NR1D1 and BMAL1. Enhances the transcriptional repressor activity of NR1D1 through stabilization of NR1D1 protein levels by preventing its ubiquitination and subsequent degradation. Represses the ligand-dependent transcriptional activation function of ESR2. Acts as a regulator of PCK1 expression and gluconeogenesis by a mechanism that involves, at least in part, both NR1D1 and SIRT1. Negatively regulates the deacetylase activity of HDAC3 and can alter its subcellular localization. Positively regulates the beta-catenin pathway (canonical Wnt signaling pathway) and is required for MCC-mediated repression of the beta-catenin pathway. Represses ligand-dependent transcriptional activation function of NR1H2 and NR1H3 and inhibits the interaction of SIRT1 with NR1H3. Plays an important role in tumor suppression through p53/TP53 regulation; stabilizes p53/TP53 by affecting its interaction with ubiquitin ligase MDM2. Represses the transcriptional activator activity of BRCA1. Inhibits SIRT1 in a CHEK2 and PSEM3-dependent manner and inhibits the activity of CHEK2 in vitro. The protein is Cell cycle and apoptosis regulator protein 2 (Ccar2) of Mus musculus (Mouse).